A 594-amino-acid polypeptide reads, in one-letter code: Alanine--tRNA ligase (594 aa).

H456, H460, C558, and H562 together coordinate Zn(2+).

Belongs to the class-II aminoacyl-tRNA synthetase family. Requires Zn(2+) as cofactor.

The protein resides in the cytoplasm. The enzyme catalyses tRNA(Ala) + L-alanine + ATP = L-alanyl-tRNA(Ala) + AMP + diphosphate. In terms of biological role, catalyzes the attachment of alanine to tRNA(Ala) in a two-step reaction: alanine is first activated by ATP to form Ala-AMP and then transferred to the acceptor end of tRNA(Ala). Also edits incorrectly charged Ser-tRNA(Ala) and Gly-tRNA(Ala) via its editing domain. The protein is Alanine--tRNA ligase (alaS) of Borrelia garinii subsp. bavariensis (strain ATCC BAA-2496 / DSM 23469 / PBi) (Borreliella bavariensis).